The primary structure comprises 125 residues: Ribosome-binding factor A (125 aa).

It belongs to the RbfA family. In terms of assembly, monomer. Binds 30S ribosomal subunits, but not 50S ribosomal subunits or 70S ribosomes.

Its subcellular location is the cytoplasm. In terms of biological role, one of several proteins that assist in the late maturation steps of the functional core of the 30S ribosomal subunit. Associates with free 30S ribosomal subunits (but not with 30S subunits that are part of 70S ribosomes or polysomes). Required for efficient processing of 16S rRNA. May interact with the 5'-terminal helix region of 16S rRNA. In Desulfitobacterium hafniense (strain DSM 10664 / DCB-2), this protein is Ribosome-binding factor A.